We begin with the raw amino-acid sequence, 117 residues long: Large ribosomal subunit protein bL20 (117 aa).

Belongs to the bacterial ribosomal protein bL20 family.

Binds directly to 23S ribosomal RNA and is necessary for the in vitro assembly process of the 50S ribosomal subunit. It is not involved in the protein synthesizing functions of that subunit. The sequence is that of Large ribosomal subunit protein bL20 from Mesomycoplasma hyopneumoniae (strain 232) (Mycoplasma hyopneumoniae).